Reading from the N-terminus, the 146-residue chain is ATP synthase epsilon chain (146 aa).

Positions 103–122 are disordered; it reads SAKKRAEQHMQEAKEKHNER.

Belongs to the ATPase epsilon chain family. As to quaternary structure, F-type ATPases have 2 components, CF(1) - the catalytic core - and CF(0) - the membrane proton channel. CF(1) has five subunits: alpha(3), beta(3), gamma(1), delta(1), epsilon(1). CF(0) has three main subunits: a, b and c.

Its subcellular location is the cell membrane. Its function is as follows. Produces ATP from ADP in the presence of a proton gradient across the membrane. This Lactobacillus johnsonii (strain CNCM I-12250 / La1 / NCC 533) protein is ATP synthase epsilon chain.